The sequence spans 596 residues: Invasin CotH7 (596 aa).

The signal sequence occupies residues 1 to 17; that stretch reads MKSLSFISLACLTAVHA. N-linked (GlcNAc...) asparagine glycosylation is found at asparagine 82, asparagine 146, asparagine 163, asparagine 169, asparagine 288, asparagine 440, and asparagine 544. Low complexity predominate over residues 528–544; that stretch reads SATIAAPATSESASQDN. The tract at residues 528-557 is disordered; that stretch reads SATIAAPATSESASQDNTSDDTDSASTSSS. Serine 567 carries the GPI-anchor amidated serine lipid modification. The propeptide at 568-596 is removed in mature form; sequence SASKSAPTFYCLQLVLYLSLSFKNLYKYI.

As to quaternary structure, interacts with host integrin beta-1 ITGB1 on the cell surface of host alveolar epithelial cells.

It localises to the cell membrane. In terms of biological role, promotes invasion of host epithelial cells by adhering to receptors on the host cell surface to facilitate endocytosis of the pathogen into host cells. Probably binds integrin ITGA3:ITGB1 via ITGB1, on the cell surface of host alveolar epithelial cells. The chain is Invasin CotH7 from Rhizopus delemar (strain RA 99-880 / ATCC MYA-4621 / FGSC 9543 / NRRL 43880) (Mucormycosis agent).